A 505-amino-acid polypeptide reads, in one-letter code: Lysine--tRNA ligase (505 aa).

Residues E415 and E422 each coordinate Mg(2+).

It belongs to the class-II aminoacyl-tRNA synthetase family. Homodimer. Mg(2+) is required as a cofactor.

Its subcellular location is the cytoplasm. The catalysed reaction is tRNA(Lys) + L-lysine + ATP = L-lysyl-tRNA(Lys) + AMP + diphosphate. This Yersinia enterocolitica serotype O:8 / biotype 1B (strain NCTC 13174 / 8081) protein is Lysine--tRNA ligase.